The chain runs to 367 residues: Tetraacyldisaccharide 4'-kinase (367 aa).

68-75 (VLGGSGKT) contributes to the ATP binding site.

Belongs to the LpxK family.

The catalysed reaction is a lipid A disaccharide + ATP = a lipid IVA + ADP + H(+). It participates in glycolipid biosynthesis; lipid IV(A) biosynthesis; lipid IV(A) from (3R)-3-hydroxytetradecanoyl-[acyl-carrier-protein] and UDP-N-acetyl-alpha-D-glucosamine: step 6/6. Functionally, transfers the gamma-phosphate of ATP to the 4'-position of a tetraacyldisaccharide 1-phosphate intermediate (termed DS-1-P) to form tetraacyldisaccharide 1,4'-bis-phosphate (lipid IVA). This chain is Tetraacyldisaccharide 4'-kinase, found in Chlamydia caviae (strain ATCC VR-813 / DSM 19441 / 03DC25 / GPIC) (Chlamydophila caviae).